A 592-amino-acid polypeptide reads, in one-letter code: V-type ATP synthase alpha chain 2 (592 aa).

Position 237-244 (237-244 (GGFGTGKT)) interacts with ATP.

The protein belongs to the ATPase alpha/beta chains family.

It carries out the reaction ATP + H2O + 4 H(+)(in) = ADP + phosphate + 5 H(+)(out). In terms of biological role, produces ATP from ADP in the presence of a proton gradient across the membrane. The V-type alpha chain is a catalytic subunit. The chain is V-type ATP synthase alpha chain 2 from Clostridium tetani (strain Massachusetts / E88).